Here is a 901-residue protein sequence, read N- to C-terminus: Disease resistance RPP8-like protein 3 (901 aa).

The stretch at 15 to 56 (ALLNRESERLNGIDEQVDGLKRQLRGLQSLLKDADAKKHGSD) forms a coiled coil. Residues 144–453 (LQDIQREIRQ…AEGIYDGLTI (310 aa)) enclose the NB-ARC domain. ATP contacts are provided by residues 190-197 (GMGGIGKT) and 385-392 (GAQIVGKS). LRR repeat units lie at residues 567-591 (LPLL…SIGG), 592-615 (LIHL…IRNL), and 833-858 (MPCL…KYVT).

It belongs to the disease resistance NB-LRR family. RPP8/HRT subfamily.

Functionally, disease resistance protein. The chain is Disease resistance RPP8-like protein 3 (RPP8L3) from Arabidopsis thaliana (Mouse-ear cress).